Reading from the N-terminus, the 301-residue chain is Hydroxyquinol 1,2-dioxygenase (301 aa).

The Fe cation site is built by Tyr169, Tyr202, His226, and His228.

The protein belongs to the intradiol ring-cleavage dioxygenase family. Fe(3+) serves as cofactor.

It carries out the reaction benzene-1,2,4-triol + O2 = maleylacetate + 2 H(+). It functions in the pathway aromatic compound metabolism. Functionally, involved in resorcinol degradation. Catalyzes the conversion of hydroxyquinol to malelylacetate. Also shows weak activity with catechol, 3-methylcatechol and 4-methylcatechol, but cannot use 4-chlorocatechol, 4-nitrocatechol or protocatechuate. This chain is Hydroxyquinol 1,2-dioxygenase, found in Corynebacterium glutamicum (strain ATCC 13032 / DSM 20300 / JCM 1318 / BCRC 11384 / CCUG 27702 / LMG 3730 / NBRC 12168 / NCIMB 10025 / NRRL B-2784 / 534).